Consider the following 81-residue polypeptide: Protein L83L (81 aa).

A disordered region spans residues 1–28 (MDTSLKNNDGALEADNKNYQDYKDEPDK). A compositionally biased stretch (basic and acidic residues) spans 14-28 (ADNKNYQDYKDEPDK).

It belongs to the asfivirus L83L family. As to quaternary structure, interacts with host IL1B.

Its subcellular location is the host cytoplasm. In terms of biological role, may subvert the host innate immune response by interacting with host IL1B and interfering with its function. This Ornithodoros (relapsing fever ticks) protein is Protein L83L.